We begin with the raw amino-acid sequence, 88 residues long: Kunitz-type U15-theraphotoxin-Hhn1c (88 aa).

The N-terminal stretch at 1-27 is a signal peptide; that stretch reads MGTARFLRAVLLLSVLLMVTFPALLSA. A propeptide spanning residues 28-33 is cleaved from the precursor; the sequence is EHHDGR. In terms of domain architecture, BPTI/Kunitz inhibitor spans 37-85; the sequence is CRLPSDSGDCLRFFEVWYFDGTTCTKFVYGGYGGNDNRFPTEKACMKRC. 2 disulfide bridges follow: C37-C85 and C60-C81.

It belongs to the venom Kunitz-type family. 03 (sub-Kunitz) subfamily. Expressed by the venom gland.

The protein localises to the secreted. Serine protease inhibitor that inhibits trypsin at a molar ratio of 1:1. The protein is Kunitz-type U15-theraphotoxin-Hhn1c of Cyriopagopus hainanus (Chinese bird spider).